The primary structure comprises 420 residues: Phosphoribosylamine--glycine ligase (420 aa).

The 207-residue stretch at 108–314 (KEIMVKYGVS…FAQNITDILD (207 aa)) folds into the ATP-grasp domain. Position 134-195 (134-195 (IEKHGAPIVV…EEFLEGEEFS (62 aa))) interacts with ATP. Mg(2+) is bound by residues glutamate 284 and asparagine 286.

It belongs to the GARS family. Mg(2+) serves as cofactor. It depends on Mn(2+) as a cofactor.

The enzyme catalyses 5-phospho-beta-D-ribosylamine + glycine + ATP = N(1)-(5-phospho-beta-D-ribosyl)glycinamide + ADP + phosphate + H(+). Its pathway is purine metabolism; IMP biosynthesis via de novo pathway; N(1)-(5-phospho-D-ribosyl)glycinamide from 5-phospho-alpha-D-ribose 1-diphosphate: step 2/2. The polypeptide is Phosphoribosylamine--glycine ligase (Streptococcus pneumoniae (strain ATCC BAA-255 / R6)).